Reading from the N-terminus, the 403-residue chain is Protein IQ-DOMAIN 23 (403 aa).

The disordered stretch occupies residues 1–43 (MGFFGRLFGSKKKSDKAASSRDKRRWSFTTRSSNSSKRAPAVT). A Nuclear localization signal motif is present at residues 10-17 (SKKKSDKA). Residues 27 to 43 (SFTTRSSNSSKRAPAVT) are compositionally biased toward polar residues. The interval 115–133 (QENIAAMKIQSAFRGYLAR) is calmodulin-binding. IQ domains follow at residues 116–144 (ENIA…ALVK) and 145–167 (LQAL…RMQT). Disordered stretches follow at residues 176-208 (RARA…RSLH), 242-301 (ILEV…PTSR), and 381-403 (GGDS…SFLV). A compositionally biased stretch (basic and acidic residues) spans 257 to 267 (LRSERNNESPR).

The protein belongs to the IQD family. In terms of assembly, binds to multiple calmodulin (CaM) in the presence of Ca(2+) and CaM-like proteins.

The protein localises to the nucleus. It localises to the nucleolus. It is found in the cytoplasm. The protein resides in the cytoskeleton. Its subcellular location is the cell membrane. In terms of biological role, may be involved in cooperative interactions with calmodulins or calmodulin-like proteins. Recruits calmodulin proteins to microtubules, thus being a potential scaffold in cellular signaling and trafficking. May associate with nucleic acids and regulate gene expression at the transcriptional or post-transcriptional level. The protein is Protein IQ-DOMAIN 23 of Arabidopsis thaliana (Mouse-ear cress).